We begin with the raw amino-acid sequence, 879 residues long: DNA mismatch repair protein MutS (879 aa).

Residue 629–636 (GPNMAGKS) coordinates ATP. Residues 824–845 (VGGQPQKELSEHKPHQPSLFAP) are disordered.

Belongs to the DNA mismatch repair MutS family.

In terms of biological role, this protein is involved in the repair of mismatches in DNA. It is possible that it carries out the mismatch recognition step. This protein has a weak ATPase activity. The polypeptide is DNA mismatch repair protein MutS (Desulfotalea psychrophila (strain LSv54 / DSM 12343)).